The following is a 276-amino-acid chain: NADPH-dependent 7-cyano-7-deazaguanine reductase (276 aa).

Residue 83 to 85 (IES) coordinates substrate. An NADPH-binding site is contributed by 85 to 86 (SK). C184 functions as the Thioimide intermediate in the catalytic mechanism. The active-site Proton donor is D191. Substrate is bound at residue 223–224 (HE). 252 to 253 (RG) is an NADPH binding site.

Belongs to the GTP cyclohydrolase I family. QueF type 2 subfamily. As to quaternary structure, homodimer.

It localises to the cytoplasm. The catalysed reaction is 7-aminomethyl-7-carbaguanine + 2 NADP(+) = 7-cyano-7-deazaguanine + 2 NADPH + 3 H(+). It participates in tRNA modification; tRNA-queuosine biosynthesis. Functionally, catalyzes the NADPH-dependent reduction of 7-cyano-7-deazaguanine (preQ0) to 7-aminomethyl-7-deazaguanine (preQ1). In Pseudomonas paraeruginosa (strain DSM 24068 / PA7) (Pseudomonas aeruginosa (strain PA7)), this protein is NADPH-dependent 7-cyano-7-deazaguanine reductase.